The sequence spans 1463 residues: DNA polymerase III PolC-type (1463 aa).

In terms of domain architecture, Exonuclease spans 425-581 (YVVFDVETTG…YDAEATGRLL (157 aa)).

It belongs to the DNA polymerase type-C family. PolC subfamily.

The protein resides in the cytoplasm. The catalysed reaction is DNA(n) + a 2'-deoxyribonucleoside 5'-triphosphate = DNA(n+1) + diphosphate. Required for replicative DNA synthesis. This DNA polymerase also exhibits 3' to 5' exonuclease activity. The sequence is that of DNA polymerase III PolC-type from Streptococcus pneumoniae serotype 4 (strain ATCC BAA-334 / TIGR4).